The primary structure comprises 522 residues: Solute carrier family 2, facilitated glucose transporter member 2 (522 aa).

Over 1-10 (MSEDKITGTL) the chain is Cytoplasmic. A helical membrane pass occupies residues 11-31 (AFTVFTAVLGSFQFGYDIGVI). Residues 32–96 (NAPQEVIISH…SAHIVTMLWS (65 aa)) are Extracellular-facing. N62 is a glycosylation site (N-linked (GlcNAc...) asparagine). The chain crosses the membrane as a helical span at residues 97–117 (LSVSSFAVGGMVASFFGGWLG). The Cytoplasmic segment spans residues 118 to 125 (DKLGRIKA). Residues 126-146 (MLAANSLSLTGALLMGCSKFG) form a helical membrane-spanning segment. At 147-156 (PAHALIIAGR) the chain is on the extracellular side. The helical transmembrane segment at 157–177 (SVSGLYCGLISGLVPMYIGEI) threads the bilayer. Over 178 to 185 (APTTLRGA) the chain is Cytoplasmic. Residues 186–206 (LGTLHQLALVTGILISQIAGL) form a helical membrane-spanning segment. Q191 lines the D-glucose pocket. Topologically, residues 207–215 (SFILGNQDY) are extracellular. Residues 216-236 (WHILLGLSAVPALLQCLLLLF) form a helical membrane-spanning segment. The Cytoplasmic portion of the chain corresponds to 237–301 (CPESPRYLYL…LFTDPNYRQP (65 aa)). A helical membrane pass occupies residues 302-322 (IVVALMLHLAQQFSGINGIFY). Residues 312–313 (QQ) and N318 each bind D-glucose. At 323–337 (YSTSIFQTAGISQPV) the chain is on the extracellular side. The chain crosses the membrane as a helical span at residues 338-358 (YATIGVGAINMIFTAVSVLLV). N347 lines the D-glucose pocket. Over 359–365 (EKAGRRT) the chain is Cytoplasmic. A helical transmembrane segment spans residues 366-386 (LFLAGMIGMFFCAVFMSLGLV). Topologically, residues 387–401 (LLDKFTWMSYVSMTA) are extracellular. The chain crosses the membrane as a helical span at residues 402-422 (IFLFVSFFEIGPGPIPWFMVA). E410 and W418 together coordinate D-glucose. Over 423–431 (EFFSQGPRP) the chain is Cytoplasmic. A helical transmembrane segment spans residues 432-452 (TALALAAFSNWVCNFIIALCF). Residues 453 to 459 (QYIADFL) are Extracellular-facing. The helical transmembrane segment at 460–480 (GPYVFFLFAGVVLVFTLFTFF) threads the bilayer. Over 481 to 522 (KVPETKGKSFDEIAAEFRKKSGSAPPRKATVQMEFLGSSETV) the chain is Cytoplasmic. At T521 the chain carries Phosphothreonine.

The protein belongs to the major facilitator superfamily. Sugar transporter (TC 2.A.1.1) family. Glucose transporter subfamily. In terms of processing, N-glycosylated; required for stability and retention at the cell surface of pancreatic beta cells. As to expression, present in liver, intestine, kidney and beta-pancreatic islet cells.

The protein localises to the cell membrane. It catalyses the reaction D-glucose(out) = D-glucose(in). The catalysed reaction is D-fructose(out) = D-fructose(in). The enzyme catalyses L-dehydroascorbate(out) = L-dehydroascorbate(in). It carries out the reaction D-galactose(in) = D-galactose(out). With respect to regulation, D-glucose and maltose competitively inhibit fructose transport. D-glucose, D-fructose and maltose inhibit deoxyglucose transport. Facilitative hexose transporter that mediates the transport of glucose, fructose and galactose. Likely mediates the bidirectional transfer of glucose across the plasma membrane of hepatocytes and is responsible for uptake of glucose by the beta cells; may comprise part of the glucose-sensing mechanism of the beta cell. May also participate with the Na(+)/glucose cotransporter in the transcellular transport of glucose in the small intestine and kidney. Also able to mediate the transport of dehydroascorbate. The chain is Solute carrier family 2, facilitated glucose transporter member 2 from Rattus norvegicus (Rat).